A 505-amino-acid chain; its full sequence is Aspartyl/glutamyl-tRNA(Asn/Gln) amidotransferase subunit B (505 aa).

Belongs to the GatB/GatE family. GatB subfamily. In terms of assembly, heterotrimer of A, B and C subunits.

It catalyses the reaction L-glutamyl-tRNA(Gln) + L-glutamine + ATP + H2O = L-glutaminyl-tRNA(Gln) + L-glutamate + ADP + phosphate + H(+). The enzyme catalyses L-aspartyl-tRNA(Asn) + L-glutamine + ATP + H2O = L-asparaginyl-tRNA(Asn) + L-glutamate + ADP + phosphate + 2 H(+). In terms of biological role, allows the formation of correctly charged Asn-tRNA(Asn) or Gln-tRNA(Gln) through the transamidation of misacylated Asp-tRNA(Asn) or Glu-tRNA(Gln) in organisms which lack either or both of asparaginyl-tRNA or glutaminyl-tRNA synthetases. The reaction takes place in the presence of glutamine and ATP through an activated phospho-Asp-tRNA(Asn) or phospho-Glu-tRNA(Gln). In Dinoroseobacter shibae (strain DSM 16493 / NCIMB 14021 / DFL 12), this protein is Aspartyl/glutamyl-tRNA(Asn/Gln) amidotransferase subunit B.